A 484-amino-acid polypeptide reads, in one-letter code: ATP synthase subunit beta (484 aa).

Residue 156-163 (GGAGVGKT) participates in ATP binding.

The protein belongs to the ATPase alpha/beta chains family. In terms of assembly, F-type ATPases have 2 components, CF(1) - the catalytic core - and CF(0) - the membrane proton channel. CF(1) has five subunits: alpha(3), beta(3), gamma(1), delta(1), epsilon(1). CF(0) has three main subunits: a(1), b(2) and c(9-12). The alpha and beta chains form an alternating ring which encloses part of the gamma chain. CF(1) is attached to CF(0) by a central stalk formed by the gamma and epsilon chains, while a peripheral stalk is formed by the delta and b chains.

The protein resides in the cell inner membrane. It catalyses the reaction ATP + H2O + 4 H(+)(in) = ADP + phosphate + 5 H(+)(out). Produces ATP from ADP in the presence of a proton gradient across the membrane. The catalytic sites are hosted primarily by the beta subunits. The polypeptide is ATP synthase subunit beta (Rhizorhabdus wittichii (strain DSM 6014 / CCUG 31198 / JCM 15750 / NBRC 105917 / EY 4224 / RW1) (Sphingomonas wittichii)).